Consider the following 179-residue polypeptide: Dual-action ribosomal maturation protein DarP (179 aa).

Belongs to the DarP family.

It is found in the cytoplasm. Its function is as follows. Member of a network of 50S ribosomal subunit biogenesis factors which assembles along the 30S-50S interface, preventing incorrect 23S rRNA structures from forming. Promotes peptidyl transferase center (PTC) maturation. This chain is Dual-action ribosomal maturation protein DarP, found in Aliivibrio fischeri (strain ATCC 700601 / ES114) (Vibrio fischeri).